A 487-amino-acid polypeptide reads, in one-letter code: L-tartrate/succinate antiporter (487 aa).

The next 14 membrane-spanning stretches (helical) occupy residues 10–30, 33–53, 54–74, 93–113, 137–157, 189–209, 236–256, 292–312, 313–333, 340–360, 370–390, 393–413, 418–438, and 465–485; these read YLAPLAVIAIIALIPVPAGLE, TWLYFAVFTGVIVGLILEPVP, GAVVAMVGISIIAILSPWLLF, WAVFGFSNSVIWLIFAAFMFG, TLFLGYAVMFSELILAPVTPS, IGSYIMWMGIVADCVTSAIFL, FLGMLPLSILLVLLVPWLAYV, LMVGALVLWIFGGDYIDAAMV, GYSVVALMLLLRIISWDDIVS, VFFWLASLITLATGLNNTGFI, SLSGYSPTMVMVALIVVFYLL, FFASATAYTSALAPMMIAAAL, IPLPVFCLMVGAAIGLGSILT, and IFGLIFLVLLVITGLLWMPVV.

It belongs to the SLC13A/DASS transporter (TC 2.A.47) family. DIT1 subfamily.

Its subcellular location is the cell inner membrane. It carries out the reaction (2R,3R)-tartrate(out) + succinate(in) = (2R,3R)-tartrate(in) + succinate(out). Its function is as follows. Catalyzes the uptake of tartrate in exchange for intracellular succinate. Essential for anaerobic L-tartrate fermentation. The chain is L-tartrate/succinate antiporter (ttdT) from Shigella boydii serotype 4 (strain Sb227).